Consider the following 310-residue polypeptide: tRNA pseudouridine synthase B (310 aa).

Asp47 acts as the Nucleophile in catalysis.

It belongs to the pseudouridine synthase TruB family. Type 1 subfamily.

It carries out the reaction uridine(55) in tRNA = pseudouridine(55) in tRNA. Its function is as follows. Responsible for synthesis of pseudouridine from uracil-55 in the psi GC loop of transfer RNAs. The chain is tRNA pseudouridine synthase B from Caulobacter vibrioides (strain ATCC 19089 / CIP 103742 / CB 15) (Caulobacter crescentus).